Here is a 186-residue protein sequence, read N- to C-terminus: PRA1 family protein G2 (186 aa).

A run of 4 helical transmembrane segments spans residues 66-86 (YFFV…LITA), 87-107 (SPVA…FHFF), 119-139 (VGDR…IWFT), and 142-162 (AVNL…HAVF).

This sequence belongs to the PRA1 family. Expressed in roots and trichomes.

It localises to the endoplasmic reticulum membrane. Functionally, may be involved in both secretory and endocytic intracellular trafficking in the endosomal/prevacuolar compartments. This Arabidopsis thaliana (Mouse-ear cress) protein is PRA1 family protein G2 (PRA1G2).